The chain runs to 274 residues: Cytochrome b-c1 complex subunit Rieske, mitochondrial (274 aa).

The Mitochondrial matrix segment spans residues 79–103; sequence SHTDIKVPDFSDYRRAEVLDSTKSS. Residues 104 to 140 traverse the membrane as a helical segment; that stretch reads KESSEARKGFSYLVTATTTVGVAYAAKNAVSQFVSSM. Topologically, residues 141–274 are mitochondrial intermembrane; it reads SASADVLAMS…FTSGDVVVVG (134 aa). One can recognise a Rieske domain in the interval 187–272; sequence EAAVEVSQLR…YEFTSGDVVV (86 aa). C217, H219, C236, H239, and S241 together coordinate [2Fe-2S] cluster. C222 and C238 form a disulfide bridge.

Belongs to the Rieske iron-sulfur protein family. As to quaternary structure, component of the ubiquinol-cytochrome c oxidoreductase (cytochrome b-c1 complex, complex III, CIII), a multisubunit enzyme composed of 11 subunits. The complex is composed of 3 respiratory subunits cytochrome b, cytochrome c1 and Rieske protein UQCRFS1, 2 core protein subunits UQCRC1/QCR1 and UQCRC2/QCR2, and 6 low-molecular weight protein subunits UQCRH/QCR6, UQCRB/QCR7, UQCRQ/QCR8, UQCR10/QCR9, UQCR11/QCR10 and subunit 9, the cleavage product of Rieske protein UQCRFS1. The complex exists as an obligatory dimer and forms supercomplexes (SCs) in the inner mitochondrial membrane with NADH-ubiquinone oxidoreductase (complex I, CI) and cytochrome c oxidase (complex IV, CIV), resulting in different assemblies (supercomplex SCI(1)III(2)IV(1) and megacomplex MCI(2)III(2)IV(2)). Incorporation of the Rieske protein UQCRFS1 is the penultimate step in complex III assembly. Interacts with TTC19, which is involved in the clearance of UQCRFS1 fragments. Component of the ubiquinol-cytochrome c oxidoreductase (cytochrome b-c1 complex, complex III, CIII). Subunit 9 corresponds to the mitochondrial targeting sequence (MTS) of Rieske protein UQCRFS1. It is retained after processing and incorporated inside complex III, where it remains bound to the complex and localizes between the 2 core subunits UQCRC1/QCR1 and UQCRC2/QCR2. It depends on [2Fe-2S] cluster as a cofactor. Proteolytic processing is necessary for the correct insertion of UQCRFS1 in the complex III dimer. Several fragments are generated during UQCRFS1 insertion, most probably due to the endogenous matrix-processing peptidase (MPP) activity of the 2 core protein subunits UQCRC1/QCR1 and UQCRC2/QCR2, which are homologous to the 2 mitochondrial-processing peptidase (MPP) subunits beta-MPP and alpha-MPP respectively. The action of the protease is also necessary for the clearance of the UQCRFS1 fragments.

Its subcellular location is the mitochondrion inner membrane. It carries out the reaction a quinol + 2 Fe(III)-[cytochrome c](out) = a quinone + 2 Fe(II)-[cytochrome c](out) + 2 H(+)(out). Component of the ubiquinol-cytochrome c oxidoreductase, a multisubunit transmembrane complex that is part of the mitochondrial electron transport chain which drives oxidative phosphorylation. The respiratory chain contains 3 multisubunit complexes succinate dehydrogenase (complex II, CII), ubiquinol-cytochrome c oxidoreductase (cytochrome b-c1 complex, complex III, CIII) and cytochrome c oxidase (complex IV, CIV), that cooperate to transfer electrons derived from NADH and succinate to molecular oxygen, creating an electrochemical gradient over the inner membrane that drives transmembrane transport and the ATP synthase. The cytochrome b-c1 complex catalyzes electron transfer from ubiquinol to cytochrome c, linking this redox reaction to translocation of protons across the mitochondrial inner membrane, with protons being carried across the membrane as hydrogens on the quinol. In the process called Q cycle, 2 protons are consumed from the matrix, 4 protons are released into the intermembrane space and 2 electrons are passed to cytochrome c. The Rieske protein is a catalytic core subunit containing a [2Fe-2S] iron-sulfur cluster. It cycles between 2 conformational states during catalysis to transfer electrons from the quinol bound in the Q(0) site in cytochrome b to cytochrome c1. Incorporation of UQCRFS1 is the penultimate step in complex III assembly. Functionally, component of the ubiquinol-cytochrome c oxidoreductase (cytochrome b-c1 complex, complex III, CIII). UQCRFS1 undergoes proteolytic processing once it is incorporated in the complex III dimer. One of the fragments, called subunit 9, corresponds to its mitochondrial targeting sequence (MTS). The proteolytic processing is necessary for the correct insertion of UQCRFS1 in the complex III dimer, but the persistence of UQCRFS1-derived fragments may prevent newly imported UQCRFS1 to be processed and assembled into complex III and is detrimental for the complex III structure and function. The chain is Cytochrome b-c1 complex subunit Rieske, mitochondrial (Uqcrfs1) from Rattus norvegicus (Rat).